A 270-amino-acid chain; its full sequence is L-aspartate dehydrogenase (270 aa).

NAD(+)-binding residues include alanine 123 and asparagine 191. Residue histidine 221 is part of the active site.

Belongs to the L-aspartate dehydrogenase family.

It carries out the reaction L-aspartate + NADP(+) + H2O = oxaloacetate + NH4(+) + NADPH + H(+). It catalyses the reaction L-aspartate + NAD(+) + H2O = oxaloacetate + NH4(+) + NADH + H(+). It participates in cofactor biosynthesis; NAD(+) biosynthesis; iminoaspartate from L-aspartate (dehydrogenase route): step 1/1. In terms of biological role, specifically catalyzes the NAD or NADP-dependent dehydrogenation of L-aspartate to iminoaspartate. The protein is L-aspartate dehydrogenase of Methanocella arvoryzae (strain DSM 22066 / NBRC 105507 / MRE50).